The chain runs to 125 residues: Small ribosomal subunit protein eS6 (125 aa).

It belongs to the eukaryotic ribosomal protein eS6 family. As to quaternary structure, part of the 30S ribosomal subunit.

The protein is Small ribosomal subunit protein eS6 of Thermococcus kodakarensis (strain ATCC BAA-918 / JCM 12380 / KOD1) (Pyrococcus kodakaraensis (strain KOD1)).